The chain runs to 315 residues: Protoheme IX farnesyltransferase (315 aa).

9 consecutive transmembrane segments (helical) span residues 21 to 41 (YFAL…LVGL), 52 to 74 (VGFC…NMWW), 98 to 118 (GEAL…LALA), 121 to 141 (LLAA…YSMW), 150 to 170 (IVIG…AATG), 177 to 197 (VLMF…LALF), 223 to 243 (ILVY…TPVA), 246 to 266 (LYLA…WDIW), and 284 to 304 (FFKF…AEAI).

It belongs to the UbiA prenyltransferase family. Protoheme IX farnesyltransferase subfamily. Interacts with CtaA.

Its subcellular location is the cell inner membrane. The catalysed reaction is heme b + (2E,6E)-farnesyl diphosphate + H2O = Fe(II)-heme o + diphosphate. The protein operates within porphyrin-containing compound metabolism; heme O biosynthesis; heme O from protoheme: step 1/1. Its function is as follows. Converts heme B (protoheme IX) to heme O by substitution of the vinyl group on carbon 2 of heme B porphyrin ring with a hydroxyethyl farnesyl side group. The protein is Protoheme IX farnesyltransferase of Dinoroseobacter shibae (strain DSM 16493 / NCIMB 14021 / DFL 12).